The primary structure comprises 195 residues: Dihydroneopterin triphosphate diphosphatase (195 aa).

Asp-73 serves as the catalytic Proton acceptor.

The protein belongs to the HAM1 NTPase family. It depends on Mn(2+) as a cofactor.

The catalysed reaction is 7,8-dihydroneopterin 3'-triphosphate + H2O = 7,8-dihydroneopterin 3'-phosphate + diphosphate + H(+). It functions in the pathway cofactor biosynthesis; tetrahydrofolate biosynthesis. In terms of biological role, pyrophosphatase involved in the biosynthesis of tetrahydrofolate. Catalyzes the hydrolysis of dihydroneopterin triphosphate (DHNTP) to dihydroneopterin monophosphate (DHNMP) and pyrophosphate. Shows a strict substrate specificity. Has only weak activity with GTP, ITP, XTP and dTTP, and cannot use ATP, UTP, CTP, NAD(+), NADH, diadenosine triphosphate, diadenosine tetraphosphate, ADP-ribose and UDP-glucose. The chain is Dihydroneopterin triphosphate diphosphatase from Limosilactobacillus reuteri (strain DSM 20016) (Lactobacillus reuteri).